The primary structure comprises 241 residues: uncharacterized protein (241 aa).

Disordered regions lie at residues 19 to 59 (ERDR…QQLG), 101 to 139 (VRRP…ASRS), and 152 to 182 (RGCR…KPCS). The span at 34–48 (ARGGRGLWTVGGGGS) shows a compositional bias: gly residues. Residues 49–58 (PTETAESQQL) are compositionally biased toward polar residues. The segment covering 106–118 (PSVPSPLPKPPVP) has biased composition (pro residues).

This is an uncharacterized protein from Homo sapiens (Human).